We begin with the raw amino-acid sequence, 244 residues long: MAKRRGLALDGVLLLDKPVGLSSNHALQRAKRTVDAAKAGHTGTLDPFATGLLVCCMGRATKISGRMLEADKTYQATLQFGEETDSGDLTGHIVARAPDGFAGVEEAALRDVLSRFVGTIEQIPPMYSALKRDGKPLYEYARAGIELDRPPRQVTIRHIELLSFSGMQAQIDVACSKGTYIRTLAQDIGRALGCHAHLAALRRTHVGPFSLDRAVTLEALQAMPDAKQALLAMNELPAGLLPAT.

Asp46 functions as the Nucleophile in the catalytic mechanism.

It belongs to the pseudouridine synthase TruB family. Type 1 subfamily.

It carries out the reaction uridine(55) in tRNA = pseudouridine(55) in tRNA. Its function is as follows. Responsible for synthesis of pseudouridine from uracil-55 in the psi GC loop of transfer RNAs. This is tRNA pseudouridine synthase B from Bordetella bronchiseptica (strain ATCC BAA-588 / NCTC 13252 / RB50) (Alcaligenes bronchisepticus).